The sequence spans 407 residues: Tryptophan 2,3-dioxygenase B (407 aa).

Substrate-binding positions include 71–75 (FIVTH) and R143. A heme-binding site is contributed by H327. Residue T341 participates in substrate binding.

The protein belongs to the tryptophan 2,3-dioxygenase family. Homotetramer. Dimer of dimers. It depends on heme as a cofactor.

The catalysed reaction is L-tryptophan + O2 = N-formyl-L-kynurenine. It functions in the pathway amino-acid degradation; L-tryptophan degradation via kynurenine pathway; L-kynurenine from L-tryptophan: step 1/2. Functionally, heme-dependent dioxygenase that catalyzes the oxidative cleavage of the L-tryptophan (L-Trp) pyrrole ring and converts L-tryptophan to N-formyl-L-kynurenine. Catalyzes the oxidative cleavage of the indole moiety. The sequence is that of Tryptophan 2,3-dioxygenase B from Danio rerio (Zebrafish).